The sequence spans 360 residues: UDP-N-acetylglucosamine--N-acetylmuramyl-(pentapeptide) pyrophosphoryl-undecaprenol N-acetylglucosamine transferase (360 aa).

UDP-N-acetyl-alpha-D-glucosamine-binding positions include 13-15 (TGG), Arg-164, Ser-192, and Gln-293.

This sequence belongs to the glycosyltransferase 28 family. MurG subfamily.

Its subcellular location is the cell inner membrane. The enzyme catalyses di-trans,octa-cis-undecaprenyl diphospho-N-acetyl-alpha-D-muramoyl-L-alanyl-D-glutamyl-meso-2,6-diaminopimeloyl-D-alanyl-D-alanine + UDP-N-acetyl-alpha-D-glucosamine = di-trans,octa-cis-undecaprenyl diphospho-[N-acetyl-alpha-D-glucosaminyl-(1-&gt;4)]-N-acetyl-alpha-D-muramoyl-L-alanyl-D-glutamyl-meso-2,6-diaminopimeloyl-D-alanyl-D-alanine + UDP + H(+). Its pathway is cell wall biogenesis; peptidoglycan biosynthesis. In terms of biological role, cell wall formation. Catalyzes the transfer of a GlcNAc subunit on undecaprenyl-pyrophosphoryl-MurNAc-pentapeptide (lipid intermediate I) to form undecaprenyl-pyrophosphoryl-MurNAc-(pentapeptide)GlcNAc (lipid intermediate II). The chain is UDP-N-acetylglucosamine--N-acetylmuramyl-(pentapeptide) pyrophosphoryl-undecaprenol N-acetylglucosamine transferase from Chromobacterium violaceum (strain ATCC 12472 / DSM 30191 / JCM 1249 / CCUG 213 / NBRC 12614 / NCIMB 9131 / NCTC 9757 / MK).